The sequence spans 189 residues: Cell division protein SepF (189 aa).

A disordered region spans residues 18–64 (EVTDHEDVAKERPVKVQKTEQTPSQQQRKPERPQETVPPRRQHIKSD). Over residues 22 to 35 (HEDVAKERPVKVQK) the composition is skewed to basic and acidic residues.

It belongs to the SepF family. As to quaternary structure, homodimer. Interacts with FtsZ.

The protein resides in the cytoplasm. Functionally, cell division protein that is part of the divisome complex and is recruited early to the Z-ring. Probably stimulates Z-ring formation, perhaps through the cross-linking of FtsZ protofilaments. Its function overlaps with FtsA. The protein is Cell division protein SepF of Streptococcus thermophilus (strain ATCC BAA-250 / LMG 18311).